The following is a 47-amino-acid chain: Laccase-2d (47 aa).

In terms of domain architecture, Plastocyanin-like spans 2-47; the sequence is TGPVADLHIINKDLSPDGFQRPTVVAGGGRDVVSIGRAGDNVTIRF.

Belongs to the multicopper oxidase family. In terms of assembly, homodimer. Cu cation serves as cofactor. Post-translationally, N-glycosylated; contains 17% carbohydrates.

The protein localises to the secreted. The catalysed reaction is 4 hydroquinone + O2 = 4 benzosemiquinone + 2 H2O. With respect to regulation, inhibited by sodium azide, SDS and mercaptoethanol, but not by 4-hexyl resocinol, L-cysteine and dithiothreitol. Activity is inhibited by the heavy metal ions Cr, W, Sn, Ag(+) and Hg(2+), but not by Pb(2+), Fe(3+), Ni(2+), Li(2+), Co(2+) or Cd(2+). Its function is as follows. Lignin degradation and detoxification of lignin-derived products. Has highest activity towards ABTS, also active towards ferulic acid and guaiacol, but is not active towards tyrosine, vanillic acid, 2,5-dimethyl aniline, p-anisidine or violuric acid. This chain is Laccase-2d, found in Cerrena unicolor (Canker rot fungus).